A 501-amino-acid chain; its full sequence is Aldehyde dehydrogenase 1A1 (501 aa).

Serine 2 bears the N-acetylserine mark. N6-acetyllysine is present on residues lysine 91 and lysine 128. Residues 167–170 (LPWN), 193–196 (KPAE), 226–227 (GP), and 246–247 (GS) each bind NAD(+). Residue lysine 252 is modified to N6-acetyllysine. Glutamate 269 (proton acceptor) is an active-site residue. Residue 269-271 (ELG) coordinates NAD(+). Residue cysteine 303 is the Nucleophile of the active site. Residues 336–501 (LTPGVSQGPQ…VTVKISQKNS (166 aa)) are mediates interaction with PRMT3. Position 337 is a phosphothreonine (threonine 337). 349 to 353 (EQYDK) contacts NAD(+). Lysine 353 and lysine 367 each carry N6-acetyllysine. 400–402 (EIF) is an NAD(+) binding site. Lysine 410 is modified (N6-acetyllysine). Serine 413 is subject to Phosphoserine. N6-acetyllysine is present on residues lysine 419, lysine 435, and lysine 495.

The protein belongs to the aldehyde dehydrogenase family. In terms of assembly, homotetramer. Interacts with PRMT3; the interaction is direct, inhibits ALDH1A1 aldehyde dehydrogenase activity and is independent of the methyltransferase activity of PRMT3. Post-translationally, the N-terminus is blocked most probably by acetylation.

It is found in the cytoplasm. The protein localises to the cytosol. Its subcellular location is the cell projection. The protein resides in the axon. It catalyses the reaction an aldehyde + NAD(+) + H2O = a carboxylate + NADH + 2 H(+). It carries out the reaction all-trans-retinal + NAD(+) + H2O = all-trans-retinoate + NADH + 2 H(+). The enzyme catalyses 9-cis-retinal + NAD(+) + H2O = 9-cis-retinoate + NADH + 2 H(+). The catalysed reaction is 11-cis-retinal + NAD(+) + H2O = 11-cis-retinoate + NADH + 2 H(+). It catalyses the reaction 13-cis-retinal + NAD(+) + H2O = 13-cis-retinoate + NADH + 2 H(+). It carries out the reaction 3-deoxyglucosone + NAD(+) + H2O = 2-dehydro-3-deoxy-D-gluconate + NADH + 2 H(+). The enzyme catalyses (E)-4-hydroxynon-2-enal + NAD(+) + H2O = (E)-4-hydroxynon-2-enoate + NADH + 2 H(+). The catalysed reaction is malonaldehyde + NAD(+) + H2O = 3-oxopropanoate + NADH + 2 H(+). It catalyses the reaction hexanal + NAD(+) + H2O = hexanoate + NADH + 2 H(+). It carries out the reaction propanal + NAD(+) + H2O = propanoate + NADH + 2 H(+). The enzyme catalyses acetaldehyde + NAD(+) + H2O = acetate + NADH + 2 H(+). The catalysed reaction is benzaldehyde + NAD(+) + H2O = benzoate + NADH + 2 H(+). It catalyses the reaction 4-aminobutanal + NAD(+) + H2O = 4-aminobutanoate + NADH + 2 H(+). The protein operates within cofactor metabolism; retinol metabolism. Its function is as follows. Cytosolic dehydrogenase that catalyzes the irreversible oxidation of a wide range of aldehydes to their corresponding carboxylic acid. Functions downstream of retinol dehydrogenases and catalyzes the oxidation of retinaldehyde into retinoic acid, the second step in the oxidation of retinol/vitamin A into retinoic acid. This pathway is crucial to control the levels of retinol and retinoic acid, two important molecules which excess can be teratogenic and cytotoxic. Also oxidizes aldehydes resulting from lipid peroxidation like (E)-4-hydroxynon-2-enal/HNE, malonaldehyde and hexanal that form protein adducts and are highly cytotoxic. By participating for instance to the clearance of (E)-4-hydroxynon-2-enal/HNE in the lens epithelium prevents the formation of HNE-protein adducts and lens opacification. Also functions downstream of fructosamine-3-kinase in the fructosamine degradation pathway by catalyzing the oxidation of 3-deoxyglucosone, the carbohydrate product of fructosamine 3-phosphate decomposition, which is itself a potent glycating agent that may react with lysine and arginine side-chains of proteins. Also has an aminobutyraldehyde dehydrogenase activity and is probably part of an alternative pathway for the biosynthesis of GABA/4-aminobutanoate in midbrain, thereby playing a role in GABAergic synaptic transmission. This chain is Aldehyde dehydrogenase 1A1, found in Equus caballus (Horse).